A 267-amino-acid chain; its full sequence is MSLSLDGVDLVHADGQRALADIRLRLAAGERVALIGPSGAGKTSLLRVLASQWRPSAGRVELLGEEPWALSAAARQRLRARIGLVHQAPPLPPRQRVVSAVLAGRLGQWPLWKSLASLVYPLDRAGAHDALQRLDLGDKLFQRCDQLSGGQLQRVGIARVLYQRAELILADEPVSAMDPVLAGHTLALLNREAAARGSTLLASLHAVDLALQHFPRVIGLRAGRIAFDLPAGEVDRAALDALYANEQLQAERASPASEPAVVHIPRC.

Residues 3–247 (LSLDGVDLVH…ALDALYANEQ (245 aa)) enclose the ABC transporter domain. 36 to 43 (GPSGAGKT) serves as a coordination point for ATP.

It belongs to the ABC transporter superfamily. Phosphonates importer (TC 3.A.1.9.1) family. As to quaternary structure, the complex is composed of two ATP-binding proteins (PhnC), two transmembrane proteins (PhnE) and a solute-binding protein (PhnD).

It is found in the cell inner membrane. The enzyme catalyses phosphonate(out) + ATP + H2O = phosphonate(in) + ADP + phosphate + H(+). In terms of biological role, part of the ABC transporter complex PhnCDE involved in phosphonates import. Responsible for energy coupling to the transport system. This is Phosphonates import ATP-binding protein PhnC 2 from Pseudomonas aeruginosa (strain UCBPP-PA14).